Here is a 211-residue protein sequence, read N- to C-terminus: Uridine kinase (211 aa).

15–22 (GGSGSGKT) is an ATP binding site.

Belongs to the uridine kinase family.

Its subcellular location is the cytoplasm. It carries out the reaction uridine + ATP = UMP + ADP + H(+). It catalyses the reaction cytidine + ATP = CMP + ADP + H(+). The protein operates within pyrimidine metabolism; CTP biosynthesis via salvage pathway; CTP from cytidine: step 1/3. Its pathway is pyrimidine metabolism; UMP biosynthesis via salvage pathway; UMP from uridine: step 1/1. The polypeptide is Uridine kinase (Latilactobacillus sakei subsp. sakei (strain 23K) (Lactobacillus sakei subsp. sakei)).